Here is a 378-residue protein sequence, read N- to C-terminus: D-alanine--D-alanine ligase (378 aa).

The region spanning 141–347 is the ATP-grasp domain; the sequence is KKLLTLNGIR…YSELIDQLIQ (207 aa). 171–226 is a binding site for ATP; the sequence is AEELGETLFVKPARQGSSVGIHKVRNEEEYNAALEDGFKYDYKILVEEAIKNPREV. Mg(2+) contacts are provided by aspartate 301, glutamate 314, and asparagine 316.

It belongs to the D-alanine--D-alanine ligase family. Mg(2+) is required as a cofactor. Requires Mn(2+) as cofactor.

The protein localises to the cytoplasm. It catalyses the reaction 2 D-alanine + ATP = D-alanyl-D-alanine + ADP + phosphate + H(+). Its pathway is cell wall biogenesis; peptidoglycan biosynthesis. Cell wall formation. This is D-alanine--D-alanine ligase from Ligilactobacillus salivarius (strain UCC118) (Lactobacillus salivarius).